We begin with the raw amino-acid sequence, 341 residues long: Transcription factor JunD (341 aa).

The disordered stretch occupies residues 21–49 (VAGAAGAPGGGGFAPPGRAFPGAPPTSSM). The Menin-binding motif (MBM) signature appears at 35-47 (PPGRAFPGAPPTS). The short motif at 51-60 (KKDALTLSLA) is the MAP kinase docking motif; essential for its phosphorylation element. Residues 65-85 (AGLKPGSATAPSALRPDGAPD) form a disordered region. Ser90 carries the phosphoserine modification. Residue Ser100 is modified to Phosphoserine; by MAPK8. Position 117 is a phosphothreonine (Thr117). The segment at 155–176 (AATAATSGAPAPPAPADLAATP) is disordered. Residues Ser245, Ser249, and Ser253 each carry the phosphoserine modification. The tract at residues 262-289 (RIKAERKRLRNRIAASKCRKRKLERISR) is basic motif. Residues 262–325 (RIKAERKRLR…AQLKQKVLSH (64 aa)) form the bZIP domain. A leucine-zipper region spans residues 290–318 (LEEKVKTLKSQNTELASTASLLREQVAQL).

It belongs to the bZIP family. Jun subfamily. Heterodimer; binds DNA as a heterodimer. Component of an AP-1 transcription factor complex composed of JUN-FOS heterodimers. As part of the AP-1 transcription factor complex, forms heterodimers with FOS proteins, thereby binding to the AP-1 consensus sequence and stimulating transcription. Forms heterodimers with FOSB; thereby binding to the AP-1 consensus sequence. Interacts (via MBM motif) with MEN1; this interaction represses transcriptional activation. Interacts with MAPK10; this interaction is inhibited in the presence of MEN1. Post-translationally, phosphorylated by MAP kinases MAPK8 and MAPK10; phosphorylation is inhibited in the presence of MEN1.

The protein resides in the nucleus. Transcription factor binding AP-1 sites. Heterodimerizes with proteins of the FOS family to form an AP-1 transcription factor complex, thereby enhancing their DNA binding activity to an AP-1 consensus sequence 3'-TGA[GC]TCA-5' and enhancing their transcriptional activity. This Rattus norvegicus (Rat) protein is Transcription factor JunD (Jund).